Reading from the N-terminus, the 644-residue chain is Protein SNOWY COTYLEDON 3 (644 aa).

Disordered stretches follow at residues 1–129 (MVAA…TRTE), 162–252 (ETAT…DGRL), and 290–414 (SDTD…SRVR). Over residues 53–77 (SPSPSHSTTTTTTTATSTSTSSSSS) the composition is skewed to low complexity. The segment covering 91 to 112 (LSRTTNSASNLVYTPSSLPKRS) has biased composition (polar residues). Residues 172 to 190 (CTPERRRATPVRDQRENSK) show a composition bias toward basic and acidic residues. Composition is skewed to polar residues over residues 290–302 (SDTDSVSSGSTNG) and 314–332 (TRSLPRNGMASTKFWQETN). Composition is skewed to low complexity over residues 343–370 (SPQCSSPSSRISSISSKFSQSKRFSSDS) and 397–412 (ATATSAPARTSSSPSR). The QWRF motif signature appears at 463–466 (QWRF).

It belongs to the QWRF family. In terms of tissue distribution, expressed in young developing tissues, such as seedlings, roots, flowers, buds and young siliques, and to a lesser extent in mature green tissues.

It is found in the peroxisome. Functionally, probable microtubule-associated peroxisomal protein required for chloroplast biogenesis and for the formation of the prolamellar body and prothylakoids in etioplasts. Not involved in peroxisomal metabolism, including mobilization of storage compounds during germination, fatty acid beta-oxydation or photorespiration. This is Protein SNOWY COTYLEDON 3 (SCO3) from Arabidopsis thaliana (Mouse-ear cress).